The sequence spans 187 residues: Biogenesis of lysosome-related organelles complex 1 subunit 5 (187 aa).

A disordered region spans residues 1–27 (MSGGGTETPVACEAAQGGGGKKRDSLG). At Ser-2 the chain carries N-acetylserine.

The protein belongs to the BLOC1S5 family. Octamer composed of one copy each BLOC1S1, BLOC1S2, BLOC1S3, BLOC1S4, BLOC1S5, BLOC1S6, DTNBP1/BLOC1S7 and SNAPIN/BLOC1S8. The BLOC-1 complex associates with the AP-3 protein complex and membrane protein cargos. Interacts with BLOC1S4, BLOC1S6, DTNBP1/BLOC1S7 and PI4K2A. Component of the biogenesis of lysosome-related organelles complex 1 (BLOC-1) composed of BLOC1S1, BLOC1S2, BLOC1S3, BLOC1S4, BLOC1S5, BLOC1S6, DTNBP1/BLOC1S7 and SNAPIN/BLOC1S8.

In terms of biological role, component of the BLOC-1 complex, a complex that is required for normal biogenesis of lysosome-related organelles (LRO), such as platelet dense granules and melanosomes. In concert with the AP-3 complex, the BLOC-1 complex is required to target membrane protein cargos into vesicles assembled at cell bodies for delivery into neurites and nerve terminals. The BLOC-1 complex, in association with SNARE proteins, is also proposed to be involved in neurite extension. Plays a role in intracellular vesicle trafficking. In Rattus norvegicus (Rat), this protein is Biogenesis of lysosome-related organelles complex 1 subunit 5 (Bloc1s5).